Consider the following 355-residue polypeptide: CX3C chemokine receptor 1 (355 aa).

The Extracellular segment spans residues 1–31 (MDQFPESVTENFEYDDLAEACYIGDIVVFGT). A helical transmembrane segment spans residues 32-59 (VFLSIFYSVIFAIGLVGNLLVVFALTNS). Over 60 to 69 (KKPKSVTDIY) the chain is Cytoplasmic. Residues 70–90 (LLNLALSDLLFVATLPFWTHY) form a helical membrane-spanning segment. Residues 91 to 103 (LINEKGLHNAMCK) are Extracellular-facing. Cys-102 and Cys-175 form a disulfide bridge. A helical transmembrane segment spans residues 104 to 125 (FTTAFFFIGFFGSIFFITVISI). The Cytoplasmic portion of the chain corresponds to 126 to 142 (DRYLAIVLAANSMNNRT). The chain crosses the membrane as a helical span at residues 143 to 167 (VQHGVTISLGVWAAAILVAAPQFMF). Residues 168 to 195 (TKQKENECLGDYPEVLQEIWPVLRNVET) are Extracellular-facing. Residues 196–215 (NFLGFLLPLLIMSYCYFRII) form a helical membrane-spanning segment. At 216–231 (QTLFSCKNHKKAKAIK) the chain is on the cytoplasmic side. Residues 232-256 (LILLVVIVFFLFWTPYNVMIFLETL) form a helical membrane-spanning segment. The Extracellular segment spans residues 257–273 (KLYDFFPSCDMRKDLRL). The chain crosses the membrane as a helical span at residues 274–297 (ALSVTETVAFSHCCLNPLIYAFAG). Topologically, residues 298-355 (EKFRRYLYHLYGKCLAVLCGRSVHVDFSSSESQRSRHGSVLSSNFTYHTSDGDALLLL) are cytoplasmic. Position 346 is a phosphothreonine (Thr-346).

The protein belongs to the G-protein coupled receptor 1 family. In terms of assembly, found in a ternary complex with CX3CL1 and ITGAV:ITGB3 or ITGA4:ITGB1. As to quaternary structure, (Microbial infection) Interacts with human respiratory syncytial virus (HRSV) protein G; this interaction modulates host immune response. (Microbial infection) Interacts with HIV-1 envelope polyprotein gp160. In terms of processing, this protein is not N-glycosylated which is unusual for G-protein-coupled receptors. As to expression, expressed in lymphoid and neural tissues. Expressed in lymphocyte subsets, such as natural killer (NK) cells, gamma-delta T-cells and terminally differentiated CD8(+) T-cells. Expressed in smooth muscle cells in atherosclerotic plaques.

It localises to the cell membrane. Its function is as follows. Receptor for the C-X3-C chemokine fractalkine (CX3CL1) present on many early leukocyte cells; CX3CR1-CX3CL1 signaling exerts distinct functions in different tissue compartments, such as immune response, inflammation, cell adhesion and chemotaxis. CX3CR1-CX3CL1 signaling mediates cell migratory functions. Responsible for the recruitment of natural killer (NK) cells to inflamed tissues. Acts as a regulator of inflammation process leading to atherogenesis by mediating macrophage and monocyte recruitment to inflamed atherosclerotic plaques, promoting cell survival. Involved in airway inflammation by promoting interleukin 2-producing T helper (Th2) cell survival in inflamed lung. Involved in the migration of circulating monocytes to non-inflamed tissues, where they differentiate into macrophages and dendritic cells. Acts as a negative regulator of angiogenesis, probably by promoting macrophage chemotaxis. Plays a key role in brain microglia by regulating inflammatory response in the central nervous system (CNS) and regulating synapse maturation. Required to restrain the microglial inflammatory response in the CNS and the resulting parenchymal damage in response to pathological stimuli. Involved in brain development by participating in synaptic pruning, a natural process during which brain microglia eliminates extra synapses during postnatal development. Synaptic pruning by microglia is required to promote the maturation of circuit connectivity during brain development. Acts as an important regulator of the gut microbiota by controlling immunity to intestinal bacteria and fungi. Expressed in lamina propria dendritic cells in the small intestine, which form transepithelial dendrites capable of taking up bacteria in order to provide defense against pathogenic bacteria. Required to initiate innate and adaptive immune responses against dissemination of commensal fungi (mycobiota) component of the gut: expressed in mononuclear phagocytes (MNPs) and acts by promoting induction of antifungal IgG antibodies response to confer protection against disseminated C.albicans or C.auris infection. Also acts as a receptor for C-C motif chemokine CCL26, inducing cell chemotaxis. Functionally, (Microbial infection) Acts as a coreceptor with CD4 for HIV-1 virus envelope protein. In terms of biological role, (Microbial infection) Acts as a coreceptor with CD4 for HIV-1 virus envelope protein. May have more potent HIV-1 coreceptothr activity than isoform 1. (Microbial infection) Acts as a coreceptor with CD4 for HIV-1 virus envelope protein. May have more potent HIV-1 coreceptor activity than isoform 1. This is CX3C chemokine receptor 1 from Homo sapiens (Human).